Reading from the N-terminus, the 94-residue chain is Aspartyl/glutamyl-tRNA(Asn/Gln) amidotransferase subunit C (94 aa).

It belongs to the GatC family. Heterotrimer of A, B and C subunits.

The catalysed reaction is L-glutamyl-tRNA(Gln) + L-glutamine + ATP + H2O = L-glutaminyl-tRNA(Gln) + L-glutamate + ADP + phosphate + H(+). It carries out the reaction L-aspartyl-tRNA(Asn) + L-glutamine + ATP + H2O = L-asparaginyl-tRNA(Asn) + L-glutamate + ADP + phosphate + 2 H(+). Functionally, allows the formation of correctly charged Asn-tRNA(Asn) or Gln-tRNA(Gln) through the transamidation of misacylated Asp-tRNA(Asn) or Glu-tRNA(Gln) in organisms which lack either or both of asparaginyl-tRNA or glutaminyl-tRNA synthetases. The reaction takes place in the presence of glutamine and ATP through an activated phospho-Asp-tRNA(Asn) or phospho-Glu-tRNA(Gln). In Hydrogenobaculum sp. (strain Y04AAS1), this protein is Aspartyl/glutamyl-tRNA(Asn/Gln) amidotransferase subunit C.